The primary structure comprises 284 residues: ELMO domain-containing protein B (284 aa).

One can recognise an ELMO domain in the interval 124-276; the sequence is EHEASLERLW…EFETKISQNS (153 aa).

In Dictyostelium discoideum (Social amoeba), this protein is ELMO domain-containing protein B (elmoB).